The following is a 131-amino-acid chain: uncharacterized protein (131 aa).

The first 26 residues, 1-26, serve as a signal peptide directing secretion; that stretch reads MKKIVAAIVVIGLVFIAFFYLYSRSG.

This is an uncharacterized protein from Bacillus subtilis (strain 168).